The chain runs to 447 residues: Na(+)-translocating NADH-quinone reductase subunit A (447 aa).

This sequence belongs to the NqrA family. In terms of assembly, composed of six subunits; NqrA, NqrB, NqrC, NqrD, NqrE and NqrF.

The catalysed reaction is a ubiquinone + n Na(+)(in) + NADH + H(+) = a ubiquinol + n Na(+)(out) + NAD(+). Functionally, NQR complex catalyzes the reduction of ubiquinone-1 to ubiquinol by two successive reactions, coupled with the transport of Na(+) ions from the cytoplasm to the periplasm. NqrA to NqrE are probably involved in the second step, the conversion of ubisemiquinone to ubiquinol. The sequence is that of Na(+)-translocating NADH-quinone reductase subunit A from Neisseria gonorrhoeae (strain NCCP11945).